The following is a 362-amino-acid chain: Peptide chain release factor 1 (362 aa).

Glutamine 240 carries the post-translational modification N5-methylglutamine.

The protein belongs to the prokaryotic/mitochondrial release factor family. Methylated by PrmC. Methylation increases the termination efficiency of RF1.

It is found in the cytoplasm. In terms of biological role, peptide chain release factor 1 directs the termination of translation in response to the peptide chain termination codons UAG and UAA. The protein is Peptide chain release factor 1 of Bifidobacterium longum (strain NCC 2705).